The sequence spans 397 residues: Trans-2-enoyl-CoA reductase [NADH] (397 aa).

Residues 53 to 58, 79 to 80, 116 to 117, and 144 to 145 contribute to the NAD(+) site; these read GCSNGY, FE, DA, and LA. Substrate is bound at residue Tyr230. Catalysis depends on Tyr240, which acts as the Proton donor. NAD(+) is bound by residues Lys249 and 276-278; that span reads LVT.

Belongs to the TER reductase family. In terms of assembly, monomer.

The enzyme catalyses a 2,3-saturated acyl-CoA + NAD(+) = a (2E)-enoyl-CoA + NADH + H(+). It participates in lipid metabolism; fatty acid biosynthesis. Its activity is regulated as follows. Inhibited by lauroyl-CoA. In terms of biological role, involved in the fatty acid synthesis (FAS II). Catalyzes the reduction of the carbon-carbon double bond of crotonyl-CoA to yield butyryl-CoA. In vitro it can also use hexenoyl-CoA and dodecenoyl-CoA as substrates. This is Trans-2-enoyl-CoA reductase [NADH] from Treponema denticola (strain ATCC 35405 / DSM 14222 / CIP 103919 / JCM 8153 / KCTC 15104).